The sequence spans 3498 residues: Mediator of RNA polymerase II transcription subunit 12 (3498 aa).

6 disordered regions span residues 365-456 (IKQH…HTDI), 497-764 (GGVG…EPEK), 2209-2576 (AKKR…AYMK), 2589-2620 (ENNRIMEEQQREREMEAARKEAARRAAEEAYA), 2637-2889 (LRKE…KEKQ), and 2917-3498 (NVAG…PNQY). Over residues 368-394 (HEKRKAGSLKKSERRRRRGLSKNRPKK) the composition is skewed to basic residues. Over residues 404–416 (SLDHDKVQIKQEP) the composition is skewed to basic and acidic residues. 2 stretches are compositionally biased toward polar residues: residues 424-440 (GQQSDNSMDYDSFSHQY) and 512-536 (SNPTPTETVNTQPQIDFESSPSASP). Residues 539–570 (SVDKENECEKKEDESKTKEKNKDKEKDKEKEK) adopt a coiled-coil conformation. Composition is skewed to basic and acidic residues over residues 540–578 (VDKENECEKKEDESKTKEKNKDKEKDKEKEKSVDEHTND) and 593–614 (ANDKTDASEKQKLVEEEPTGKE). Residues 621–630 (SKTAKTSTSA) are compositionally biased toward low complexity. Composition is skewed to basic and acidic residues over residues 691 to 719 (EVDKAPEVDKSEKEHEDDIMIIESNKKAD), 738 to 764 (ESEKKKDGEEERDKNKDTDVADNEPEK), and 2209 to 2285 (AKKR…KRAS). A required for nuclear localization region spans residues 2142–3498 (QTTRLDKVAK…YPNQQPPNQY (1357 aa)). Residues 2203-2290 (VIDEEEAKKR…EKRASDAAAA (88 aa)) are a coiled coil. Low complexity-rich tracts occupy residues 2342 to 2360 (RADTAQAAAATTQWNAPIA) and 2409 to 2431 (LADASAAAAAANSNAMGNTSSMP). Residues 2395–2420 (RNLLNRKKEEKRNSLADASAAAAAAN) adopt a coiled-coil conformation. A compositionally biased stretch (polar residues) spans 2444–2456 (QSAGATQQLQGMQ). Residues 2459–2479 (QMGGSMSGMNQNMGGMNQSMS) are compositionally biased toward low complexity. Over residues 2514 to 2530 (NRSSGPVSSETRQQIME) the composition is skewed to polar residues. Basic and acidic residues-rich tracts occupy residues 2547 to 2576 (QKQRDAREREAREREAREHQERMQREAYMK), 2589 to 2616 (ENNRIMEEQQREREMEAARKEAARRAAE), and 2637 to 2724 (LRKE…EQQR). Residues 2725–2770 (RSQQNPYMNQQGQYSQQPPPSYQQSSYPNNYQPGQQGNQPPNYQQP) are compositionally biased toward low complexity. Polar residues predominate over residues 2771-2783 (SHQSMQQGHQAGY). The span at 2784 to 2810 (QQTSNQMQMNMQQQQNRQQGGPQQSFS) shows a compositional bias: low complexity. 4 stretches are compositionally biased toward polar residues: residues 2816–2827 (NQPSQPGYSGYN), 2842–2852 (RNPFGNQQDMQ), 2868–2881 (HAQQYQHTQNQLSL), and 2926–2956 (GQQQLGASDQMGTSQLPGASTSRMNQGSSNP). The span at 2957-2993 (QGGMQSYQQQQPVLGQPGPIQTGQSTQQQIPAQSQQQ) shows a compositional bias: low complexity. The segment covering 2994 to 3009 (YNSGRPQMHTTPTKND) has biased composition (polar residues). Residues 3039 to 3100 (GQNVPGGYQQ…NVSQSQSAAQ (62 aa)) are compositionally biased toward low complexity. Polar residues predominate over residues 3103-3127 (RPSQDSAYQQSGYNQTGNQSYQRPD). Low complexity-rich tracts occupy residues 3128 to 3184 (QQQQ…SAQY) and 3192 to 3223 (QGYDQQQQGQIAPQQAQNPQASQSYGQQQTQQ). Positions 3231–3253 (SGYTANSGGSSNILNQSMEESGL) are enriched in polar residues. The segment covering 3254–3311 (NQGFSGASSNASSQQGGSSQMQQSGYGMPGNQMQMQQNQKQQVQRGMPTGMGQTNMGQ) has biased composition (low complexity). Residues 3312 to 3321 (SGMGQSGMGQ) are compositionally biased toward gly residues. Low complexity-rich tracts occupy residues 3336-3356 (QGQQSQQPQQPQVSQQQNQRG) and 3370-3408 (QQQHQPQQSQISQQQQQQDQYRRMQAAQMQQQPTAQGQQ). Over residues 3414-3425 (PSQQQSGAAYSN) the composition is skewed to polar residues. Positions 3426–3436 (QMQFQGVRQGQ) are enriched in low complexity. A compositionally biased stretch (gly residues) spans 3437 to 3446 (QGMGGMGGSG). The span at 3447–3498 (QQQPQTQPHGSNQYYQQQQDQRMQQQPQQPGQQQQHGYGMGQYPNQQPPNQY) shows a compositional bias: low complexity.

The protein belongs to the Mediator complex subunit 12 family. Component of the Mediator complex. As to expression, ubiquitously expressed.

Its subcellular location is the nucleus. Its function is as follows. Component of the Mediator complex, a coactivator involved in regulated gene transcription of nearly all RNA polymerase II-dependent genes. Mediator functions as a bridge to convey information from gene-specific regulatory proteins to the basal RNA polymerase II transcription machinery. Mediator is recruited to promoters by direct interactions with regulatory proteins and serves as a scaffold for the assembly of a functional preinitiation complex with RNA polymerase II and the general transcription factors. Functions downstream of let-60 during vulval induction. Required for asymmetric division of T-cells and for hypodermal development. This Caenorhabditis elegans protein is Mediator of RNA polymerase II transcription subunit 12 (dpy-22).